Here is a 374-residue protein sequence, read N- to C-terminus: MSAEVIKCKAAVAWEAGKPVSIEEVEVAPPKAHEVRIKIIATAVCHTDAYTLSGADPEGSFPVILGHEGAGIVESVGEGVTKLKAGDTVIPLYIPQCGECKFCLNPQTNLCQKIRTTQGKGLMPDGTSRFTCKGKTILHYMGTSTFSEYTVVADISVAKIDPLAPLDKVCLLGCGVSTGYGAAVNTAKVEPGSTCAIFGLGGVGLAVIMGCKVAGASRIIGVDINKDKFAKAKEFGASECINPQDFSKPIQEVLIEMTDGGVDYSFECIGNVKVMRAALEACHKGWGVSVVVGVAASGEEIATRPFQLVTGRTWKGTAFGGWKSVESIPKLVSEYMSKKIKVDEFVTHSLSFDQINEAFELMHAGKSIRTVVKL.

An N-acetylserine modification is found at S2. Zn(2+) is bound by residues C45, H67, C97, C100, C103, C111, and C174. K233 is modified (N6-succinyllysine). Position 247 is a phosphoserine (S247). K315 carries the N6-succinyllysine modification. Residues S324 and S351 each carry the phosphoserine modification.

This sequence belongs to the zinc-containing alcohol dehydrogenase family. Class-III subfamily. In terms of assembly, homodimer. Zn(2+) is required as a cofactor.

Its subcellular location is the cytoplasm. The catalysed reaction is a primary alcohol + NAD(+) = an aldehyde + NADH + H(+). It carries out the reaction a secondary alcohol + NAD(+) = a ketone + NADH + H(+). It catalyses the reaction S-(hydroxymethyl)glutathione + NADP(+) = S-formylglutathione + NADPH + H(+). The enzyme catalyses S-(hydroxymethyl)glutathione + NAD(+) = S-formylglutathione + NADH + H(+). The catalysed reaction is 20-oxo-(5Z,8Z,11Z,14Z)-eicosatetraenoate + NAD(+) + H2O = (5Z,8Z,11Z,14Z)-eicosatetraenedioate + NADH + 2 H(+). It carries out the reaction 20-hydroxy-(5Z,8Z,11Z,14Z)-eicosatetraenoate + NAD(+) = 20-oxo-(5Z,8Z,11Z,14Z)-eicosatetraenoate + NADH + H(+). It catalyses the reaction S-nitrosoglutathione + NADH + H(+) = S-(hydroxysulfenamide)glutathione + NAD(+). Catalyzes the oxidation of long-chain primary alcohols and the oxidation of S-(hydroxymethyl) glutathione. Also oxidizes long chain omega-hydroxy fatty acids, such as 20-HETE, producing both the intermediate aldehyde, 20-oxoarachidonate and the end product, a dicarboxylic acid, (5Z,8Z,11Z,14Z)-eicosatetraenedioate. Class-III ADH is remarkably ineffective in oxidizing ethanol. Required for clearance of cellular formaldehyde, a cytotoxic and carcinogenic metabolite that induces DNA damage. Also acts as a S-nitroso-glutathione reductase by catalyzing the NADH-dependent reduction of S-nitrosoglutathione, thereby regulating protein S-nitrosylation. The protein is Alcohol dehydrogenase class-3 of Equus caballus (Horse).